Here is a 70-residue protein sequence, read N- to C-terminus: Conotoxin ArMKLT2-0111 (70 aa).

The N-terminal stretch at M1–G22 is a signal peptide. A propeptide spanning residues E23–R40 is cleaved from the precursor. Q41 is subject to Pyrrolidone carboxylic acid. 3 disulfide bridges follow: C42–C56, C49–C60, and C55–C67.

It belongs to the conotoxin O1 superfamily. As to expression, expressed by the venom duct.

The protein resides in the secreted. This chain is Conotoxin ArMKLT2-0111, found in Conus arenatus (Sand-dusted cone).